Consider the following 66-residue polypeptide: MKAAELRNLTNEELMNLLEEKKRTLMNLRFQNVLGQLTDYSQISKTRKDIARIKTILRERELGVRR.

It belongs to the universal ribosomal protein uL29 family.

This is Large ribosomal subunit protein uL29 from Thermosipho africanus (strain TCF52B).